Consider the following 160-residue polypeptide: S-ribosylhomocysteine lyase (160 aa).

Positions 57, 61, and 127 each coordinate Fe cation.

This sequence belongs to the LuxS family. Homodimer. Fe cation serves as cofactor.

The catalysed reaction is S-(5-deoxy-D-ribos-5-yl)-L-homocysteine = (S)-4,5-dihydroxypentane-2,3-dione + L-homocysteine. In terms of biological role, involved in the synthesis of autoinducer 2 (AI-2) which is secreted by bacteria and is used to communicate both the cell density and the metabolic potential of the environment. The regulation of gene expression in response to changes in cell density is called quorum sensing. Catalyzes the transformation of S-ribosylhomocysteine (RHC) to homocysteine (HC) and 4,5-dihydroxy-2,3-pentadione (DPD). In Streptococcus agalactiae serotype V (strain ATCC BAA-611 / 2603 V/R), this protein is S-ribosylhomocysteine lyase.